The following is an 884-amino-acid chain: Lon protease homolog 2, peroxisomal (884 aa).

The Lon N-terminal domain maps to 12-255 (LAILPFRNKV…KATELVDRHL (244 aa)). The segment at 67-101 (SLLSPGVGSDSGEGGSKAPGGSAGESTKQDTKNGK) is disordered. Residues 75-89 (SDSGEGGSKAPGGSA) are compositionally biased toward gly residues. 408–415 (GPPGVGKT) lines the ATP pocket. Residues 689–874 (VASPGVSVGL…EEVLDHAFEG (186 aa)) form the Lon proteolytic domain. Residues serine 780 and lysine 823 contribute to the active site. The short motif at 882-884 (SKL) is the Microbody targeting signal element.

Belongs to the peptidase S16 family.

It is found in the peroxisome matrix. The enzyme catalyses Hydrolysis of proteins in presence of ATP.. Its function is as follows. ATP-dependent serine protease that mediates the selective degradation of misfolded and unassembled polypeptides in the peroxisomal matrix. Necessary for type 2 peroxisome targeting signal (PTS2)-containing protein processing and facilitates peroxisome matrix protein import. The protein is Lon protease homolog 2, peroxisomal of Oryza sativa subsp. japonica (Rice).